We begin with the raw amino-acid sequence, 506 residues long: uncharacterized protein (506 aa).

Residue 282–289 (GIQGTGKS) coordinates ATP.

This sequence belongs to the AAA ATPase family. Highly divergent.

The protein resides in the plastid. The protein localises to the chloroplast. This is an uncharacterized protein from Guillardia theta (Cryptophyte).